A 262-amino-acid chain; its full sequence is Acyl-[acyl-carrier-protein]--UDP-N-acetylglucosamine O-acyltransferase (262 aa).

It belongs to the transferase hexapeptide repeat family. LpxA subfamily. In terms of assembly, homotrimer.

It localises to the cytoplasm. It carries out the reaction a (3R)-hydroxyacyl-[ACP] + UDP-N-acetyl-alpha-D-glucosamine = a UDP-3-O-[(3R)-3-hydroxyacyl]-N-acetyl-alpha-D-glucosamine + holo-[ACP]. It participates in glycolipid biosynthesis; lipid IV(A) biosynthesis; lipid IV(A) from (3R)-3-hydroxytetradecanoyl-[acyl-carrier-protein] and UDP-N-acetyl-alpha-D-glucosamine: step 1/6. Involved in the biosynthesis of lipid A, a phosphorylated glycolipid that anchors the lipopolysaccharide to the outer membrane of the cell. The chain is Acyl-[acyl-carrier-protein]--UDP-N-acetylglucosamine O-acyltransferase from Vibrio campbellii (strain ATCC BAA-1116).